The sequence spans 63 residues: MRFFSLFTFLVAFIAAALAAPVEIGEDLFALRPTGAKRDIILMMPVCFEGEKLNKDQTKCIKA.

The first 19 residues, 1-19 (MRFFSLFTFLVAFIAAALA), serve as a signal peptide directing secretion. A propeptide spanning residues 20–42 (APVEIGEDLFALRPTGAKRDIIL) is cleaved from the precursor. Cysteine 47 and cysteine 60 are joined by a disulfide.

Expressed by the venom gland.

It is found in the secreted. In Platymeris rhadamanthus (Red spot assassin bug), this protein is U-reduvitoxin-Pr9a.